The following is a 267-amino-acid chain: MPRKLRDLPEEGEIVMATVERVEDHGAFVTLDEYPGVDGYIHISEVASGWVKNIRDYVKEGQKVVAKVIRVNPKRKYANLSLRKVTDHQRKEKLKEWKREQRAEKLLEMAAEELGKDLDEAYEEAGYKLIEEYGSLYDALERAAAEEGPEPLLKAGVPEEWAEKLAELAIENIEPGRVKIEAYVDLTCPAPNGVEIIREALEKIEEFQQGDVKMEVQYVGAPRYRITVDAPDYRTAEKMVRKAAQAAIDHVEEHGGEGEFHREIEEG.

An S1 motif domain is found at 12–83; sequence GEIVMATVER…KRKYANLSLR (72 aa).

The protein belongs to the eIF-2-alpha family. In terms of assembly, heterotrimer composed of an alpha, a beta and a gamma chain.

EIF-2 functions in the early steps of protein synthesis by forming a ternary complex with GTP and initiator tRNA. This is Translation initiation factor 2 subunit alpha from Methanopyrus kandleri (strain AV19 / DSM 6324 / JCM 9639 / NBRC 100938).